A 141-amino-acid chain; its full sequence is Hemoglobin subunit alpha (141 aa).

The Globin domain occupies 1–141 (VLSSTDKSNV…VSTVLTSKYR (141 aa)). Serine 3 is subject to Phosphoserine. N6-succinyllysine is present on residues lysine 7 and lysine 11. Lysine 16 is modified (N6-acetyllysine; alternate). Lysine 16 is modified (N6-succinyllysine; alternate). At tyrosine 24 the chain carries Phosphotyrosine. Serine 35 is modified (phosphoserine). Position 40 is an N6-succinyllysine (lysine 40). Residue histidine 58 coordinates O2. Histidine 87 contributes to the heme b binding site. Residue serine 102 is modified to Phosphoserine. At threonine 108 the chain carries Phosphothreonine. Residues serine 124 and serine 131 each carry the phosphoserine modification. Residues threonine 134 and threonine 137 each carry the phosphothreonine modification. Serine 138 bears the Phosphoserine mark.

Belongs to the globin family. In terms of assembly, heterotetramer of two alpha chains and two beta chains. As to expression, red blood cells.

In terms of biological role, involved in oxygen transport from the lung to the various peripheral tissues. Hemopressin acts as an antagonist peptide of the cannabinoid receptor CNR1. Hemopressin-binding efficiently blocks cannabinoid receptor CNR1 and subsequent signaling. The chain is Hemoglobin subunit alpha (HBA) from Pteropus poliocephalus (Grey-headed flying fox).